The sequence spans 618 residues: Chaperone protein HscA homolog (618 aa).

Belongs to the heat shock protein 70 family.

Its function is as follows. Chaperone involved in the maturation of iron-sulfur cluster-containing proteins. Has a low intrinsic ATPase activity which is markedly stimulated by HscB. The sequence is that of Chaperone protein HscA homolog from Methylibium petroleiphilum (strain ATCC BAA-1232 / LMG 22953 / PM1).